A 243-amino-acid chain; its full sequence is Pyridoxine 5'-phosphate synthase (243 aa).

Asparagine 9 contributes to the 3-amino-2-oxopropyl phosphate binding site. 11–12 (DH) is a 1-deoxy-D-xylulose 5-phosphate binding site. Arginine 20 provides a ligand contact to 3-amino-2-oxopropyl phosphate. The active-site Proton acceptor is histidine 45. Arginine 47 and histidine 52 together coordinate 1-deoxy-D-xylulose 5-phosphate. The active-site Proton acceptor is the glutamate 72. Threonine 102 contacts 1-deoxy-D-xylulose 5-phosphate. Histidine 193 serves as the catalytic Proton donor. Residues glycine 194 and 215 to 216 (GH) contribute to the 3-amino-2-oxopropyl phosphate site.

Belongs to the PNP synthase family. As to quaternary structure, homooctamer; tetramer of dimers.

It localises to the cytoplasm. It catalyses the reaction 3-amino-2-oxopropyl phosphate + 1-deoxy-D-xylulose 5-phosphate = pyridoxine 5'-phosphate + phosphate + 2 H2O + H(+). The protein operates within cofactor biosynthesis; pyridoxine 5'-phosphate biosynthesis; pyridoxine 5'-phosphate from D-erythrose 4-phosphate: step 5/5. Catalyzes the complicated ring closure reaction between the two acyclic compounds 1-deoxy-D-xylulose-5-phosphate (DXP) and 3-amino-2-oxopropyl phosphate (1-amino-acetone-3-phosphate or AAP) to form pyridoxine 5'-phosphate (PNP) and inorganic phosphate. The protein is Pyridoxine 5'-phosphate synthase of Salmonella typhi.